A 131-amino-acid chain; its full sequence is Methylglyoxal synthase (131 aa).

The region spanning Met1 to Lys131 is the MGS-like domain. Residues His8, Lys12, Thr34–Thr37, and Ser54–Gly55 contribute to the substrate site. Catalysis depends on Asp60, which acts as the Proton donor/acceptor. His87 lines the substrate pocket.

It belongs to the methylglyoxal synthase family.

It catalyses the reaction dihydroxyacetone phosphate = methylglyoxal + phosphate. Functionally, catalyzes the formation of methylglyoxal from dihydroxyacetone phosphate. The sequence is that of Methylglyoxal synthase from Bacillus anthracis (strain A0248).